Reading from the N-terminus, the 452-residue chain is Retrograde protein of 51 kDa (452 aa).

Positions 1–13 (MQKGAKIEDEGRQ) are enriched in basic and acidic residues. The disordered stretch occupies residues 1 to 50 (MQKGAKIEDEGRQSRIQSRNFIIQRSDPRTRGSSVYSSRSSSYNVRSSIS). The segment at 1-75 (MQKGAKIEDE…KGNREKEKRE (75 aa)) is head. A compositionally biased stretch (polar residues) spans 14–23 (SRIQSRNFII). Residues 33–50 (SSVYSSRSSSYNVRSSIS) show a composition bias toward low complexity. Positions 72 to 424 (EKREMQNLNE…KLLEGEESRV (353 aa)) constitute an IF rod domain. The segment at 76-111 (MQNLNERLASYIEKVHFLDAQVKKLEAENEALRNRK) is coil 1A. The linker 1 stretch occupies residues 112–121 (VEDLQPIRDA). Positions 122-259 (YENELRQARK…DLLDQLELLK (138 aa)) are coil 1B. S156 carries the sulfoserine modification. A linker 12 region spans residues 260-278 (PEPIQIKGMDYADFWKSEL). The tract at residues 279-424 (AKCVREINLA…KLLEGEESRV (146 aa)) is coil 2. The interval 425–452 (GLRTLVEQAIGTQSKGSASLKDAIQSSS) is tail.

It belongs to the intermediate filament family.

The chain is Retrograde protein of 51 kDa (RGP51) from Lymnaea stagnalis (Great pond snail).